We begin with the raw amino-acid sequence, 748 residues long: 5-methyltetrahydropteroyltriglutamate--homocysteine methyltransferase (748 aa).

5-methyltetrahydropteroyltri-L-glutamate is bound by residues 18 to 21 (REWK) and Lys-112. L-homocysteine contacts are provided by residues 420 to 422 (IGS) and Glu-473. L-methionine is bound by residues 420–422 (IGS) and Glu-473. Trp-550 is a 5-methyltetrahydropteroyltri-L-glutamate binding site. Residue Asp-588 coordinates L-homocysteine. Asp-588 lines the L-methionine pocket. Glu-594 serves as a coordination point for 5-methyltetrahydropteroyltri-L-glutamate. Residues His-630, Cys-632, and Glu-654 each coordinate Zn(2+). His-683 (proton donor) is an active-site residue. Position 715 (Cys-715) interacts with Zn(2+).

This sequence belongs to the vitamin-B12 independent methionine synthase family. Zn(2+) is required as a cofactor.

It catalyses the reaction 5-methyltetrahydropteroyltri-L-glutamate + L-homocysteine = tetrahydropteroyltri-L-glutamate + L-methionine. The protein operates within amino-acid biosynthesis; L-methionine biosynthesis via de novo pathway; L-methionine from L-homocysteine (MetE route): step 1/1. In terms of biological role, catalyzes the transfer of a methyl group from 5-methyltetrahydrofolate to homocysteine resulting in methionine formation. In Staphylococcus epidermidis (strain ATCC 12228 / FDA PCI 1200), this protein is 5-methyltetrahydropteroyltriglutamate--homocysteine methyltransferase.